The sequence spans 561 residues: Guanine nucleotide-binding protein-like 3 (561 aa).

Residues 28–46 (HNRKLKKAAKKQGISRKAK) are compositionally biased toward basic residues. 2 disordered regions span residues 28–58 (HNRK…APFK) and 76–110 (KEQN…KKAK). Positions 53 to 98 (NSAPFKEEVLREAEQRKQELETLKEQNKIVKQQEKAAKRKKEKDAA) form a coiled coil. The segment covering 76–88 (KEQNKIVKQQEKA) has biased composition (basic and acidic residues). A CP-type G domain is found at 133–319 (CQELNKVIEA…MIDSPGILAA (187 aa)). GTP-binding positions include 181–184 (NKID), 268–275 (GFPNVGKS), and 312–315 (DSPG). Positions 486–532 (ATTTDAEEEKMDTTTNTDEPEAESHISSTVEPIQEPTEKRKDKPAKE) are disordered. Positions 521-532 (PTEKRKDKPAKE) are enriched in basic and acidic residues.

It belongs to the TRAFAC class YlqF/YawG GTPase family.

It is found in the nucleus. Its subcellular location is the nucleolus. May play a role in regulating cellular proliferation. The protein is Guanine nucleotide-binding protein-like 3 (gnl3) of Danio rerio (Zebrafish).